The sequence spans 336 residues: Ribosomal RNA small subunit methyltransferase C (336 aa).

Belongs to the methyltransferase superfamily. RsmC family. As to quaternary structure, monomer.

It is found in the cytoplasm. The catalysed reaction is guanosine(1207) in 16S rRNA + S-adenosyl-L-methionine = N(2)-methylguanosine(1207) in 16S rRNA + S-adenosyl-L-homocysteine + H(+). Specifically methylates the guanine in position 1207 of 16S rRNA in the 30S particle. The sequence is that of Ribosomal RNA small subunit methyltransferase C from Buchnera aphidicola subsp. Schizaphis graminum (strain Sg).